The sequence spans 756 residues: 5-methyltetrahydropteroyltriglutamate--homocysteine methyltransferase (756 aa).

Residues 16-19 (RELK) and lysine 112 each bind 5-methyltetrahydropteroyltri-L-glutamate. Residues 432 to 434 (IGS) and glutamate 485 each bind L-homocysteine. L-methionine is bound by residues 432 to 434 (IGS) and glutamate 485. 5-methyltetrahydropteroyltri-L-glutamate contacts are provided by residues 516 to 517 (RC) and tryptophan 562. Residue aspartate 600 participates in L-homocysteine binding. L-methionine is bound at residue aspartate 600. Residue glutamate 606 coordinates 5-methyltetrahydropteroyltri-L-glutamate. Positions 642, 644, and 666 each coordinate Zn(2+). Histidine 695 acts as the Proton donor in catalysis. Cysteine 727 is a Zn(2+) binding site.

This sequence belongs to the vitamin-B12 independent methionine synthase family. The cofactor is Zn(2+).

The enzyme catalyses 5-methyltetrahydropteroyltri-L-glutamate + L-homocysteine = tetrahydropteroyltri-L-glutamate + L-methionine. It functions in the pathway amino-acid biosynthesis; L-methionine biosynthesis via de novo pathway; L-methionine from L-homocysteine (MetE route): step 1/1. Functionally, catalyzes the transfer of a methyl group from 5-methyltetrahydrofolate to homocysteine resulting in methionine formation. In Haemophilus influenzae (strain PittEE), this protein is 5-methyltetrahydropteroyltriglutamate--homocysteine methyltransferase.